A 359-amino-acid chain; its full sequence is 3-dehydroquinate synthase (359 aa).

NAD(+)-binding positions include 69-74 (SGESSK), 103-107 (GVVGD), 127-128 (TT), Lys139, Lys148, and 166-169 (TLST). Zn(2+) contacts are provided by Glu181, His242, and His259.

The protein belongs to the sugar phosphate cyclases superfamily. Dehydroquinate synthase family. NAD(+) serves as cofactor. Co(2+) is required as a cofactor. Requires Zn(2+) as cofactor.

It localises to the cytoplasm. It carries out the reaction 7-phospho-2-dehydro-3-deoxy-D-arabino-heptonate = 3-dehydroquinate + phosphate. Its pathway is metabolic intermediate biosynthesis; chorismate biosynthesis; chorismate from D-erythrose 4-phosphate and phosphoenolpyruvate: step 2/7. In terms of biological role, catalyzes the conversion of 3-deoxy-D-arabino-heptulosonate 7-phosphate (DAHP) to dehydroquinate (DHQ). This Oceanobacillus iheyensis (strain DSM 14371 / CIP 107618 / JCM 11309 / KCTC 3954 / HTE831) protein is 3-dehydroquinate synthase.